A 679-amino-acid polypeptide reads, in one-letter code: Methionine--tRNA ligase (679 aa).

The short motif at 15-25 is the 'HIGH' region element; it reads PYANGPVHIGH. Cys147, Cys150, Cys160, and Cys163 together coordinate Zn(2+). The 'KMSKS' region motif lies at 332–336; the sequence is KISTS. Thr335 contacts ATP. Residues 578–679 enclose the tRNA-binding domain; it reads DFMKLDIRVG…KEVKPGSEVK (102 aa).

This sequence belongs to the class-I aminoacyl-tRNA synthetase family. MetG type 1 subfamily. As to quaternary structure, homodimer. Zn(2+) serves as cofactor.

The protein localises to the cytoplasm. The catalysed reaction is tRNA(Met) + L-methionine + ATP = L-methionyl-tRNA(Met) + AMP + diphosphate. In terms of biological role, is required not only for elongation of protein synthesis but also for the initiation of all mRNA translation through initiator tRNA(fMet) aminoacylation. The chain is Methionine--tRNA ligase from Parabacteroides distasonis (strain ATCC 8503 / DSM 20701 / CIP 104284 / JCM 5825 / NCTC 11152).